A 262-amino-acid polypeptide reads, in one-letter code: Indole-3-glycerol phosphate synthase (262 aa).

The protein belongs to the TrpC family.

It carries out the reaction 1-(2-carboxyphenylamino)-1-deoxy-D-ribulose 5-phosphate + H(+) = (1S,2R)-1-C-(indol-3-yl)glycerol 3-phosphate + CO2 + H2O. Its pathway is amino-acid biosynthesis; L-tryptophan biosynthesis; L-tryptophan from chorismate: step 4/5. The polypeptide is Indole-3-glycerol phosphate synthase (Staphylococcus epidermidis (strain ATCC 12228 / FDA PCI 1200)).